Consider the following 336-residue polypeptide: Protein-glutamate methylesterase/protein-glutamine glutaminase 3 (336 aa).

The 118-residue stretch at 2–119 (KIAIVNDMPM…PNPKEAAAPL (118 aa)) folds into the Response regulatory domain. The residue at position 53 (aspartate 53) is a 4-aspartylphosphate. Residues 147-336 (PARRDRLVAI…APRLVEVFTQ (190 aa)) form the CheB-type methylesterase domain. Active-site residues include serine 159, histidine 186, and aspartate 279.

Belongs to the CheB family. In terms of processing, phosphorylated by CheA. Phosphorylation of the N-terminal regulatory domain activates the methylesterase activity.

The protein localises to the cytoplasm. It catalyses the reaction [protein]-L-glutamate 5-O-methyl ester + H2O = L-glutamyl-[protein] + methanol + H(+). The catalysed reaction is L-glutaminyl-[protein] + H2O = L-glutamyl-[protein] + NH4(+). Involved in chemotaxis. Part of a chemotaxis signal transduction system that modulates chemotaxis in response to various stimuli. Catalyzes the demethylation of specific methylglutamate residues introduced into the chemoreceptors (methyl-accepting chemotaxis proteins or MCP) by CheR. Also mediates the irreversible deamidation of specific glutamine residues to glutamic acid. The polypeptide is Protein-glutamate methylesterase/protein-glutamine glutaminase 3 (Pseudomonas savastanoi pv. phaseolicola (strain 1448A / Race 6) (Pseudomonas syringae pv. phaseolicola (strain 1448A / Race 6))).